Reading from the N-terminus, the 488-residue chain is Splicing factor U2AF 65 kDa subunit (488 aa).

2 stretches are compositionally biased toward basic and acidic residues: residues 25-55 and 78-129; these read LESL…DEDR and DRRD…KYRF. The interval 25 to 133 is disordered; sequence LESLQEDVKP…PKKYRFWDVP (109 aa). RRM domains follow at residues 175–257, 282–359, and 389–479; these read RRLY…RPRD, NKIF…LACA, and EILC…YYDV.

It belongs to the splicing factor SR family. In terms of assembly, forms a heterodimer with the U2AF small subunit.

Its subcellular location is the nucleus. Functionally, necessary for the splicing of pre-mRNA. Binds to the polypyrimidine tract of introns early during spliceosome assembly. In Caenorhabditis briggsae, this protein is Splicing factor U2AF 65 kDa subunit (uaf-1).